Consider the following 507-residue polypeptide: uncharacterized protein (507 aa).

12 consecutive transmembrane segments (helical) span residues 11-31 (ILCF…IFPI), 97-117 (AWIA…YGHL), 125-145 (PVSF…GFAP), 149-169 (VFAV…IVFY), 187-207 (FFNW…CGYW), 209-229 (SAAI…LWLP), 283-303 (LFSS…WFST), 326-346 (FVQA…DLFI), 354-374 (LHQV…ALMI), 388-408 (LAII…WDAC), 423-443 (IGIG…PQMA), and 452-472 (IPYI…CFFL).

Belongs to the major facilitator superfamily.

Its subcellular location is the membrane. This is an uncharacterized protein from Caenorhabditis elegans.